Here is a 349-residue protein sequence, read N- to C-terminus: UDP-N-acetylenolpyruvoylglucosamine reductase (349 aa).

In terms of domain architecture, FAD-binding PCMH-type spans G25–R197. R173 is a catalytic residue. S249 (proton donor) is an active-site residue. E345 is a catalytic residue.

It belongs to the MurB family. The cofactor is FAD.

It is found in the cytoplasm. It catalyses the reaction UDP-N-acetyl-alpha-D-muramate + NADP(+) = UDP-N-acetyl-3-O-(1-carboxyvinyl)-alpha-D-glucosamine + NADPH + H(+). Its pathway is cell wall biogenesis; peptidoglycan biosynthesis. Cell wall formation. This is UDP-N-acetylenolpyruvoylglucosamine reductase from Burkholderia vietnamiensis (strain G4 / LMG 22486) (Burkholderia cepacia (strain R1808)).